Here is a 218-residue protein sequence, read N- to C-terminus: MGGVSTARPVIGVLALQGGVAEHLTALERSGAEARPVRRPEELAQVHGLVLPGGESTAMTRLLDGFELFEPLRERLAAGMPAFGSCAGMVLLAGTVLDDRVEQDTPPVRPFGAIDMAVRRNAFGRQVDSFEADLDFAGVTDGPVHAVFIRAPWVDKVGADVRVLASVAPSGHGSEVTAPAGRIVAVQQGPVLATAFHPELVSGDERVHRYFVQTVRAS.

54 to 56 (GES) is a binding site for L-glutamine. Cys-86 (nucleophile) is an active-site residue. Residues Arg-120 and 149 to 150 (IR) contribute to the L-glutamine site. Active-site charge relay system residues include His-197 and Glu-199.

It belongs to the glutaminase PdxT/SNO family. As to quaternary structure, in the presence of PdxS, forms a dodecamer of heterodimers. Only shows activity in the heterodimer.

The catalysed reaction is aldehydo-D-ribose 5-phosphate + D-glyceraldehyde 3-phosphate + L-glutamine = pyridoxal 5'-phosphate + L-glutamate + phosphate + 3 H2O + H(+). It catalyses the reaction L-glutamine + H2O = L-glutamate + NH4(+). Its pathway is cofactor biosynthesis; pyridoxal 5'-phosphate biosynthesis. In terms of biological role, catalyzes the hydrolysis of glutamine to glutamate and ammonia as part of the biosynthesis of pyridoxal 5'-phosphate. The resulting ammonia molecule is channeled to the active site of PdxS. The sequence is that of Pyridoxal 5'-phosphate synthase subunit PdxT from Saccharopolyspora erythraea (strain ATCC 11635 / DSM 40517 / JCM 4748 / NBRC 13426 / NCIMB 8594 / NRRL 2338).